A 122-amino-acid polypeptide reads, in one-letter code: MKLPRLLQASNSKGVLAEKQALSYLQEQGLRLICQNYYCRFGEIDLIMIDQDTLVFIEVRYRKNSDFGGPFASINKSKQRKIITTAKHYLRTLEDEPFCRFDAIAIDSKSTTPAWIQNAFQE.

The protein belongs to the UPF0102 family.

The protein is UPF0102 protein Ping_1176 of Psychromonas ingrahamii (strain DSM 17664 / CCUG 51855 / 37).